Consider the following 150-residue polypeptide: Ribonuclease K6 (150 aa).

The first 23 residues, 1–23 (MVLCFPLLLLLLVLWGQVCPLHA), serve as a signal peptide directing secretion. H38 (proton acceptor) is an active-site residue. Disulfide bonds link C46/C104, C60/C114, C78/C129, and C85/C92. N55 carries an N-linked (GlcNAc...) asparagine glycan. Residues 61-65 (KPQNT) and K86 each bind substrate. A glycan (N-linked (GlcNAc...) asparagine) is linked at N100. Position 105 (R105) interacts with substrate. The active-site Proton donor is H145.

Belongs to the pancreatic ribonuclease family. In terms of assembly, interacts (via N-terminus) with bacterial lipopolysaccharide (LPS).

It localises to the secreted. The protein resides in the lysosome. Its subcellular location is the cytoplasmic granule. Ribonuclease which shows a preference for the pyrimidines uridine and cytosine. Has potent antibacterial activity against a range of Gram-positive and Gram-negative bacteria, including P.aeruginosa, A.baumanii, M.luteus, S.aureus, E.faecalis, E.faecium, S.saprophyticus and E.coli. Causes loss of bacterial membrane integrity, and also promotes agglutination of Gram-negative bacteria. Probably contributes to urinary tract sterility. Bactericidal activity is independent of RNase activity. This chain is Ribonuclease K6 (RNASE6), found in Saimiri sciureus (Common squirrel monkey).